Consider the following 394-residue polypeptide: Obg-like ATPase 1 (394 aa).

The 258-residue stretch at 25–282 (LKIGIVGLPN…MPPDEAAKYC (258 aa)) folds into the OBG-type G domain. ATP-binding positions include 34–39 (NVGKST), 56–60 (FCTID), and 94–97 (DIAG). Residues serine 38 and threonine 58 each contribute to the Mg(2+) site. Phenylalanine 129 serves as a coordination point for GTP. ATP is bound by residues 230–231 (NM), methionine 231, and 263–265 (SCA). Residue 263–265 (SCA) participates in GTP binding. A TGS domain is found at 303–386 (HLIYFFTAGP…QDADIIFFKF (84 aa)).

The protein belongs to the TRAFAC class OBG-HflX-like GTPase superfamily. OBG GTPase family. YchF/OLA1 subfamily. As to quaternary structure, monomer (Potential). Interacts with GAP1. It depends on Mg(2+) as a cofactor.

The protein resides in the cytoplasm. Its subcellular location is the cell membrane. It localises to the cytosol. Its activity is regulated as follows. Activated by GAP1. Functionally, hydrolyzes ATP, and can also hydrolyze GTP with lower efficiency. Has lower affinity for GTP (Potential). Exhibits GTPase activity. Exhibits similar binding affinities and hydrolytic activities toward both GTP and ATP. Binds to the 26 S ribosomal RNA in vitro, but not to the 5.8 S or 18 S rRNA. Confers sensitivity to salinity stress by suppressing the anti-oxidation enzymatic activities and increasing lipid peroxidation thus leading to the accumulation of reactive oxygen species (ROS). This is Obg-like ATPase 1 from Oryza sativa subsp. indica (Rice).